A 319-amino-acid chain; its full sequence is Sulfate adenylyltransferase subunit 2 (319 aa).

Disordered regions lie at residues 1-22 (MNPG…TRRP) and 296-319 (RGAT…EGYF).

This sequence belongs to the PAPS reductase family. CysD subfamily.

The enzyme catalyses sulfate + ATP + H(+) = adenosine 5'-phosphosulfate + diphosphate. It functions in the pathway antibiotic biosynthesis; mitomycin C biosynthesis. With CysN forms the ATP sulfurylase (ATPS) that catalyzes the adenylation of sulfate producing adenosine 5'-phosphosulfate (APS) and diphosphate, the first enzymatic step in sulfur assimilation pathway. APS synthesis involves the formation of a high-energy phosphoric-sulfuric acid anhydride bond driven by GTP hydrolysis by CysN coupled to ATP hydrolysis by CysD. This is Sulfate adenylyltransferase subunit 2 (mmcV) from Streptomyces lavendulae.